The following is a 364-amino-acid chain: Envelope glycoprotein US27 (364 aa).

The Virion surface portion of the chain corresponds to 1–36 (MTTSTTTTTNIMLQVSNVTNHTLNSTEIYQLFEYTR). 3 N-linked (GlcNAc...) asparagine; by host glycosylation sites follow: Asn-17, Asn-20, and Asn-24. Residues 37 to 57 (FGVWLMCIVGTFLNMLVITTI) form a helical membrane-spanning segment. The Intravirion portion of the chain corresponds to 58-69 (LYYRRKKKSPSD). Residues 70–90 (TYICNLAVADLLIVVGLPFFL) traverse the membrane as a helical segment. Residues 91–103 (EYAKHHPKLSREV) lie on the Virion surface side of the membrane. A helical transmembrane segment spans residues 104-124 (VCSGLNACFYICLFAGVCFLI). At 125–150 (NLSMDRYCVIVWGVELNRVRNNKRAT) the chain is on the intravirion side. Residues 151-171 (CWVVIFWILAALMGMPHYLMY) traverse the membrane as a helical segment. Over 172–188 (SHTNNECVGEFANETSG) the chain is Virion surface. Residues 189 to 209 (WFPVFLNTKVNICGYLAPIVL) traverse the membrane as a helical segment. Topologically, residues 210-234 (MAYTYNRMVRFIINYVGKWHMQTLH) are intravirion. A helical transmembrane segment spans residues 235-255 (VLLVVVVSFASFWFPFNLALF). Residues 256 to 279 (LESIRLLSGTQNETLQTVITFCLY) lie on the Virion surface side of the membrane. A helical transmembrane segment spans residues 280–300 (VGQFLAYVRACLNPGIYILVG). At 301 to 364 (TQMRKDMWTT…MESGEEEFLL (64 aa)) the chain is on the intravirion side. Residues 344–364 (KRTHYDRKHAPMESGEEEFLL) form a disordered region.

Belongs to the G-protein coupled receptor 1 family. In terms of assembly, heterodimerizes with US28.

It localises to the virion. The protein resides in the host cell membrane. Its function is as follows. Plays an important role in spread of HCMV via the extracellular route. As a G-protein-coupled receptor (vGPCR), may activate signaling pathways important for virion assembly or egress processes. This is Envelope glycoprotein US27 (US27) from Homo sapiens (Human).